The following is a 345-amino-acid chain: Annexin A9 (345 aa).

4 Annexin repeats span residues 41–112, 113–184, 197–266, and 270–341; these read FSVD…ALLQ, PTAQ…ALAK, NLAE…GLAS, and NTPL…ALCR.

It belongs to the annexin family. As to quaternary structure, homodimer. In terms of tissue distribution, expressed in the stratified squamous skin epithelium, but not in epithelia of other types (at protein level).

Functionally, low affinity receptor for acetylcholine known to be targeted by disease-causing pemphigus vulgaris antibodies in keratinocytes. This is Annexin A9 (ANXA9) from Homo sapiens (Human).